A 107-amino-acid polypeptide reads, in one-letter code: RecQ-mediated genome instability protein 2 homolog (107 aa).

This sequence belongs to the RMI2 family. Component of the RMI complex, containing at least top-3, rmh-1 and rmh-2. Component of the BTR double Holliday Junction dissolution complex composed of at least him-6, top-3, rmh-1 and rmif-2, which is involved in double strand break repair in the germline. Interacts with rmh-1; the interaction is direct and is required for mutual stability and localization at nuclear foci. Expressed in the germline.

The protein localises to the nucleus. Essential component of the RMI complex, a complex that plays an important role in the processing of homologous recombination intermediates. Component of the BTR double Holliday Junction dissolution complex, which is involved in homologous recombination during meiotic double strand break in the germline. Plays a role in double strand break repair by positively regulating the accumulation of rad-51 at double strand breaks. Stabilizes and positively regulates the localization of the BTR double Holliday Junction dissolution complex components rmh-1, him-6 and top-3 at nuclear foci during meiotic recombination. Positively regulates meiotic recombination, chiasma formation, and chromosome segregation in meiosis. Positively regulates DNA crossover formation and positioning on chromosome arms (away from the chromosome center) during homologous recombination. This Caenorhabditis elegans protein is RecQ-mediated genome instability protein 2 homolog.